The primary structure comprises 273 residues: MADSSKKLTVLLSGASGLTGSLAFKKLKERSDKFEVRGLVRSEASKQKLGGGDEIFIGDISDPKTLEPAMEGIDALIILTSAIPRMKPTEEFTAEMISGGRSEDVIDASFSGPMPEFYYDEGQYPEQVDWIGQKNQIDTAKKMGVKHIVLVGSMGGCDPDHFLNHMGNGNILIWKRKAEQYLADSGVPYTIIRAGGLDNKAGGVRELLVAKDDVLLPTENGFIARADVAEACVQALEIEEVKNKAFDLGSKPEGVGEATKDFKALFSQVTTPF.

Catalysis depends on Ser153, which acts as the Proton donor. Residues 157-161 (CDPDH) and Lys175 each bind substrate.

Belongs to the NAD(P)-dependent epimerase/dehydratase family. In terms of assembly, monomer.

The enzyme catalyses dihydrosanguinarine + NADP(+) = sanguinarine + NADPH. The catalysed reaction is dihydrosanguinarine + NAD(+) = sanguinarine + NADH. It catalyses the reaction dihydrochelirubine + NAD(+) = chelirubine + NADH. It carries out the reaction dihydrochelirubine + NADP(+) = chelirubine + NADPH. With respect to regulation, inhibited by iodoacetamide and irreversibly by its product, dihydrosanguinarine. Its function is as follows. Catalyzes the reduction of benzophenanthridines, preferentially sanguinarine, to the corresponding dihydroalkaloids. Involved in detoxifying the phytoalexins produced by plant itself. The sanguinarine produced by intact cells upon elicitation, after excretion and binding to cell wall elements, is rapidly reabsorbed and reduced to the less toxic dihydrosanguinarine. Can work with both NAD(P) or NAD as a hydrogen donor, but at low concentrations, the reaction velocity with NAD(P)H is threefold higher than with NADH. However, chelerythrine shows maximum conversion rates with NADH. The substrate preference is sanguinarine &gt; chelerythrine &gt; chelirubine, macarpine or 10-OH-chelerythrine. No activity with berberine or phenanthridine cations. The protein is Sanguinarine reductase of Eschscholzia californica (California poppy).